The chain runs to 230 residues: Uracil phosphoribosyltransferase (230 aa).

38 to 42 (KGLVK) is a GTP binding site. 5-phospho-alpha-D-ribose 1-diphosphate contacts are provided by residues Arg87, Arg112, and 140–148 (DPMIATGST). Residues Ile204 and 209–211 (GDA) each bind uracil. Asp210 provides a ligand contact to 5-phospho-alpha-D-ribose 1-diphosphate.

It belongs to the UPRTase family. The cofactor is Mg(2+).

The enzyme catalyses UMP + diphosphate = 5-phospho-alpha-D-ribose 1-diphosphate + uracil. Its pathway is pyrimidine metabolism; UMP biosynthesis via salvage pathway; UMP from uracil: step 1/1. Allosterically activated by GTP. Its function is as follows. Catalyzes the conversion of uracil and 5-phospho-alpha-D-ribose 1-diphosphate (PRPP) to UMP and diphosphate. The sequence is that of Uracil phosphoribosyltransferase from Thermococcus kodakarensis (strain ATCC BAA-918 / JCM 12380 / KOD1) (Pyrococcus kodakaraensis (strain KOD1)).